We begin with the raw amino-acid sequence, 388 residues long: 2-methylene-furan-3-one reductase (388 aa).

The N-terminal 60 residues, 1–60 (MEALLSSTTLQLKPLHPPSSFSSLHSPFSSISVLRVKGSKKAETFIQRSNFSTVLPLRVS), are a transit peptide targeting the chloroplast. NADP(+) is bound by residues K125, 240 to 241 (GV), 263 to 266 (STGK), Y281, 330 to 332 (FVV), and 377 to 378 (RA). Residue K125 participates in substrate binding.

The protein belongs to the zinc-containing alcohol dehydrogenase family. Quinone oxidoreductase subfamily. As to quaternary structure, monomer.

The protein resides in the plastid. It localises to the chloroplast. The catalysed reaction is 4-hydroxy-2,5-dimethyl-furan-3(2H)-one + NADP(+) = 4-hydroxy-5-methyl-2-methylenefuran-3(2H)-one + NADPH + H(+). In terms of biological role, enone oxidoreductase involved in the biosynthesis of 4-hydroxy-2,5-dimethyl-3(2H)-furanone (HDMF or furaneol). Can use both NADH and NADPH as the electron donor. The protein is 2-methylene-furan-3-one reductase (EO) of Solanum lycopersicum (Tomato).